Consider the following 319-residue polypeptide: MGRKCRKLLLKGIPICGVILLILWGYSLYNTLRFMVPGKATEPFTLSLSDVSDDTSAPGEMEKIPRVIHQLWKDENIPERWSNTVNSCRRQHPDENGWQFILWTDEKIMSFMNENYSWFMPVFHSYPYNIQKFDAARYFILYHYGGVYMDLDIGCKKPMDPLLSKATFILPSTEPIGYSNDWFAATPKHPFLYQAIHNLSKFNHRYFTKYPTVFLSAGPLFLSYQFCKYLLTPHEPVRVLPALLYGNGPNSFFSHVTGDSWHGTDAKVFIWIDRNSKSVLFFAFLAAFAILFLCLRVVFKRRRKRGIAASHSQIQELYP.

The helical transmembrane segment at 8–28 (LLLKGIPICGVILLILWGYSL) threads the bilayer. Residues Asn115 and Asn198 are each glycosylated (N-linked (GlcNAc...) asparagine). 2 consecutive transmembrane segments (helical) span residues 211–231 (PTVF…KYLL) and 279–299 (VLFF…RVVF).

Belongs to the glycosyltransferase 32 family.

The protein resides in the golgi apparatus. Its subcellular location is the cis-Golgi network membrane. It localises to the trans-Golgi network membrane. Its function is as follows. With imt2 and imt3, is required for the synthesis of mannosyl phosphorylinositol ceramide (MIPC). Catalyzes the addition of mannosyl to phosphorylinositol ceramide (IPC). MIPC is essential for cell morphology, cell-surface distribution of ergosterol, localization for plasma-membrane transporters, and lipid-raft-mediated endocytosis of plasma membrane proteins to the vacuole. The sequence is that of Inositol phosphoceramide mannosyltransferase 1 (imt1) from Schizosaccharomyces pombe (strain 972 / ATCC 24843) (Fission yeast).